The chain runs to 394 residues: Phosphoglycerate kinase (394 aa).

Substrate-binding positions include 21 to 23 (DLN), arginine 37, 60 to 63 (HLGR), arginine 115, and arginine 148. Residues lysine 199, glutamate 321, and 347–350 (GGDT) contribute to the ATP site.

This sequence belongs to the phosphoglycerate kinase family. In terms of assembly, monomer.

The protein localises to the cytoplasm. It carries out the reaction (2R)-3-phosphoglycerate + ATP = (2R)-3-phospho-glyceroyl phosphate + ADP. It functions in the pathway carbohydrate degradation; glycolysis; pyruvate from D-glyceraldehyde 3-phosphate: step 2/5. The polypeptide is Phosphoglycerate kinase (Aromatoleum aromaticum (strain DSM 19018 / LMG 30748 / EbN1) (Azoarcus sp. (strain EbN1))).